Here is a 519-residue protein sequence, read N- to C-terminus: Chaperone SurA (519 aa).

The signal sequence occupies residues 1–31 (MMRSLHSLRRMSGTVLALMLAAGLPLSAAQA). 2 stretches are compositionally biased toward low complexity: residues 31-45 (AQPA…QKPA) and 197-207 (PAAAQATRAPA). 2 disordered regions span residues 31 to 50 (AQPA…PAPS) and 196 to 221 (NPAA…PAQS). Positions 223–324 (PAMLVLAQIL…NGFHILKVVD (102 aa)) constitute a PpiC 1 domain. Positions 328 to 361 (GGQPAQAARPAPAPAPQQPSSFQEGPSVAAPQGP) are disordered. Residues 364-463 (VTQTHARHIL…FGWHLIQVLE (100 aa)) form the PpiC 2 domain.

It is found in the periplasm. It carries out the reaction [protein]-peptidylproline (omega=180) = [protein]-peptidylproline (omega=0). Its function is as follows. Chaperone involved in the correct folding and assembly of outer membrane proteins. Recognizes specific patterns of aromatic residues and the orientation of their side chains, which are found more frequently in integral outer membrane proteins. May act in both early periplasmic and late outer membrane-associated steps of protein maturation. This is Chaperone SurA from Bordetella parapertussis (strain 12822 / ATCC BAA-587 / NCTC 13253).